Reading from the N-terminus, the 542-residue chain is Multidrug transporter DTR1 (542 aa).

Residues Asn-6 and Asn-46 are each glycosylated (N-linked (GlcNAc...) asparagine). The helical transmembrane segment at 80–100 (LIFLIVIYNGFLGPLAGNVFI) threads the bilayer. Asn-111 and Asn-118 each carry an N-linked (GlcNAc...) asparagine glycan. 5 consecutive transmembrane segments (helical) span residues 119–139 (ATVS…GALA), 146–166 (ILYI…ASVP), 169–189 (IGSL…VISL), 210–230 (FMLG…LILL), and 237–257 (WLFG…ILLL). N-linked (GlcNAc...) asparagine glycosylation occurs at Asn-274. A run of 4 helical transmembrane segments spans residues 332–352 (IMTF…FCTY), 374–394 (IGAC…IGGH), 419–439 (ILTV…GWCI), and 441–461 (FHYH…GLTW). Asn-463 is a glycosylation site (N-linked (GlcNAc...) asparagine). A run of 2 helical transmembrane segments spans residues 481–501 (AIAV…ALIA) and 511–531 (FCFL…LVLI).

The protein belongs to the major facilitator superfamily. CAR1 family.

Its subcellular location is the cell membrane. Plasma membrane acetic acid exporter, relieving the stress induced upon cells within hemocytes, and thus enabling increased proliferation and virulence against Galleria mellonella larvae. Confers resistance to weak acid and oxidative stress, but not to antifungal drugs. This chain is Multidrug transporter DTR1, found in Candida glabrata (strain ATCC 2001 / BCRC 20586 / JCM 3761 / NBRC 0622 / NRRL Y-65 / CBS 138) (Yeast).